The primary structure comprises 233 residues: Ribose-5-phosphate isomerase A (233 aa).

Substrate-binding positions include 31-34 (SGST), 87-90 (DGAD), and 100-103 (KGGG). Catalysis depends on Glu-109, which acts as the Proton acceptor. Position 127 (Lys-127) interacts with substrate.

Belongs to the ribose 5-phosphate isomerase family. Homodimer.

It carries out the reaction aldehydo-D-ribose 5-phosphate = D-ribulose 5-phosphate. It functions in the pathway carbohydrate degradation; pentose phosphate pathway; D-ribose 5-phosphate from D-ribulose 5-phosphate (non-oxidative stage): step 1/1. Functionally, catalyzes the reversible conversion of ribose-5-phosphate to ribulose 5-phosphate. This Chlamydia felis (strain Fe/C-56) (Chlamydophila felis) protein is Ribose-5-phosphate isomerase A.